Consider the following 368-residue polypeptide: 3-dehydroquinate synthase (368 aa).

NAD(+) is bound by residues 131–132 (TT), Lys144, and Lys153. Zn(2+) contacts are provided by Glu186, His249, and His267.

Belongs to the sugar phosphate cyclases superfamily. Dehydroquinate synthase family. The cofactor is Co(2+). Zn(2+) serves as cofactor. It depends on NAD(+) as a cofactor.

It localises to the cytoplasm. The catalysed reaction is 7-phospho-2-dehydro-3-deoxy-D-arabino-heptonate = 3-dehydroquinate + phosphate. Its pathway is metabolic intermediate biosynthesis; chorismate biosynthesis; chorismate from D-erythrose 4-phosphate and phosphoenolpyruvate: step 2/7. Catalyzes the conversion of 3-deoxy-D-arabino-heptulosonate 7-phosphate (DAHP) to dehydroquinate (DHQ). The protein is 3-dehydroquinate synthase of Pelagibacter ubique (strain HTCC1062).